Consider the following 314-residue polypeptide: Bifunctional pinoresinol-lariciresinol reductase 3 (314 aa).

Residues 11-17 (GGTGFIG), Arg-36, and Lys-45 each bind NADP(+). The Proton acceptor role is filled by Lys-138. Arg-142 contacts NADP(+). His-272 contributes to the substrate binding site.

Belongs to the NmrA-type oxidoreductase family. Isoflavone reductase subfamily. Dimer.

It carries out the reaction (-)-lariciresinol + NADP(+) = (-)-pinoresinol + NADPH + H(+). The enzyme catalyses (+)-secoisolariciresinol + NADP(+) = (-)-lariciresinol + NADPH + H(+). Functionally, reductase involved in lignan biosynthesis. Catalyzes the enantioselective sequential conversion of (-)-pinoresinol into (-)-lariciresinol and of (-)-lariciresinol into (+)-secoisolariciresinol. Abstracts the 4R-hydride from the NADPH cofactor during catalysis. The sequence is that of Bifunctional pinoresinol-lariciresinol reductase 3 from Thuja plicata (Western red-cedar).